A 120-amino-acid polypeptide reads, in one-letter code: Transmembrane protein 010R (120 aa).

Helical transmembrane passes span 40 to 60 (FCGA…ATAT) and 72 to 92 (SIFF…VWFL).

The protein belongs to the IIV-6 010R family.

Its subcellular location is the membrane. This is Transmembrane protein 010R from Invertebrate iridescent virus 6 (IIV-6).